We begin with the raw amino-acid sequence, 502 residues long: Lysine--tRNA ligase (502 aa).

Mg(2+) is bound by residues Glu-412 and Glu-419.

Belongs to the class-II aminoacyl-tRNA synthetase family. As to quaternary structure, homodimer. The cofactor is Mg(2+).

It is found in the cytoplasm. It catalyses the reaction tRNA(Lys) + L-lysine + ATP = L-lysyl-tRNA(Lys) + AMP + diphosphate. This chain is Lysine--tRNA ligase, found in Nitrosomonas europaea (strain ATCC 19718 / CIP 103999 / KCTC 2705 / NBRC 14298).